A 195-amino-acid chain; its full sequence is UPF0314 protein RHECIAT_CH0004233 (195 aa).

4 helical membrane-spanning segments follow: residues 15-35 (FWFV…YLMG), 64-84 (WYTP…YLIL), 127-147 (GDSI…FFFA), and 150-170 (APVA…GYVI).

The protein belongs to the UPF0314 family.

It localises to the cell membrane. This is UPF0314 protein RHECIAT_CH0004233 from Rhizobium etli (strain CIAT 652).